Here is a 416-residue protein sequence, read N- to C-terminus: Ena/VASP-like protein (416 aa).

Residues 1–112 (MSEQSICQAR…NAMLFALNIM (112 aa)) form the WH1 domain. A compositionally biased stretch (polar residues) spans 114 to 129 (SQEGGPSSQRQVQNGP). Disordered stretches follow at residues 114–133 (SQEGGPSSQRQVQNGPSPDE) and 141–369 (VMEQ…PAGS). Ser130 carries the phosphoserine modification. Basic and acidic residues predominate over residues 141-157 (VMEQHQQQRQESLERRT). Over residues 169 to 180 (PSSAASAPVSCS) the composition is skewed to low complexity. The segment covering 181 to 206 (GPPPPPPPPVPPPPTGATPPPPPPLP) has biased composition (pro residues). Positions 222–242 (GLAAAIAGAKLRRVQRPEDAS) are EVH2 block A. An EVH2 region spans residues 222-413 (GLAAAIAGAK…DAIRQELSGI (192 aa)). A KLKR motif is present at residues 231 to 234 (KLRR). A compositionally biased stretch (low complexity) spans 242-253 (SGGSSPSGTSKS). Residues Ser246 and Ser259 each carry the phosphoserine modification. The segment at 265 to 282 (GGLMEEMNKLLAKRRKAA) is EVH2 block B. Positions 299–320 (EDPSTSPSPGTRAASQPPNSSE) are enriched in polar residues. 8 positions are modified to phosphoserine: Ser304, Ser306, Ser329, Ser331, Ser341, Ser349, Ser354, and Ser369. Residues 321-331 (AGRKPWERSNS) are compositionally biased toward basic and acidic residues. The tract at residues 342 to 362 (RTPSVAKSPEAKSPLQSQPHS) is required for interaction with ZDHHC17. The EVH2 block C stretch occupies residues 379-413 (DLDRMKQEILEEVVRELHKVKEEIIDAIRQELSGI).

It belongs to the Ena/VASP family. Homotetramer. Binds to the SH3 domains of ABL1, LYN and SRC. Also binds to profilin, with preference for isoform IIa of PFN2, and the WW domain of APBB1/FE65. Binds to SEMA6A. Interacts, via the Pro-rich region, with the C-terminal SH3 domain of DNMBP. Interacts with RAPH1. Binds, via the EVH1 domain, the Pro-rich domain of Listeria monocytogenes actA. Binds, via the EVH1 domain, the Pro-rich domain of ZYX. Interacts with FYB1. Interacts with ZDHHC17. Post-translationally, phosphorylated by PKA; phosphorylation abolishes binding to SH3 domains of ABL and SRC.

The protein resides in the cytoplasm. It is found in the cytoskeleton. The protein localises to the stress fiber. It localises to the cell projection. Its subcellular location is the lamellipodium. Functionally, ena/VASP proteins are actin-associated proteins involved in a range of processes dependent on cytoskeleton remodeling and cell polarity such as axon guidance and lamellipodial and filopodial dynamics in migrating cells. EVL enhances actin nucleation and polymerization. This Homo sapiens (Human) protein is Ena/VASP-like protein (EVL).